Here is a 227-residue protein sequence, read N- to C-terminus: Transcription elongation factor A protein-like 2 (227 aa).

2 disordered regions span residues 1–145 and 202–227; these read MEKL…TNKG and FYPRGPREFRGGCRAPRRDTEDIPYV. Composition is skewed to basic and acidic residues over residues 18–43, 50–82, 90–113, 120–136, and 206–227; these read IDNEEQPPHEGKPEVACILEDKKLEN, TGKRVEEPLKDKEKPESAGKAKGEGKSERKGKS, TEGKPERGGRAEGEGEPDSEREPE, SETRAAGKRPAEDDIPR, and GPREFRGGCRAPRRDTEDIPYV.

It belongs to the TFS-II family. TFA subfamily.

It is found in the nucleus. Functionally, may be involved in transcriptional regulation. In Homo sapiens (Human), this protein is Transcription elongation factor A protein-like 2 (TCEAL2).